The chain runs to 473 residues: Photosystem II CP43 reaction center protein (473 aa).

A propeptide spanning residues 1–14 is cleaved from the precursor; sequence MKTLYSLRRFYHVE. At Thr-15 the chain carries N-acetylthreonine. Position 15 is a phosphothreonine (Thr-15). 5 helical membrane-spanning segments follow: residues 69-93, 134-155, 178-200, 255-275, and 291-312; these read LFEV…PHLA, LLGP…KDRN, KALY…RKIT, KPFA…LSYS, and WFNN…ASQA. Glu-367 contacts [CaMn4O5] cluster. A helical membrane pass occupies residues 447–471; it reads RARAAAAGFEKGIDRDFEPVLSMTP.

This sequence belongs to the PsbB/PsbC family. PsbC subfamily. PSII is composed of 1 copy each of membrane proteins PsbA, PsbB, PsbC, PsbD, PsbE, PsbF, PsbH, PsbI, PsbJ, PsbK, PsbL, PsbM, PsbT, PsbX, PsbY, PsbZ, Psb30/Ycf12, at least 3 peripheral proteins of the oxygen-evolving complex and a large number of cofactors. It forms dimeric complexes. Requires Binds multiple chlorophylls and provides some of the ligands for the Ca-4Mn-5O cluster of the oxygen-evolving complex. It may also provide a ligand for a Cl- that is required for oxygen evolution. PSII binds additional chlorophylls, carotenoids and specific lipids. as cofactor.

The protein resides in the plastid. The protein localises to the chloroplast thylakoid membrane. In terms of biological role, one of the components of the core complex of photosystem II (PSII). It binds chlorophyll and helps catalyze the primary light-induced photochemical processes of PSII. PSII is a light-driven water:plastoquinone oxidoreductase, using light energy to abstract electrons from H(2)O, generating O(2) and a proton gradient subsequently used for ATP formation. This chain is Photosystem II CP43 reaction center protein, found in Draba nemorosa (Woodland whitlowgrass).